A 523-amino-acid polypeptide reads, in one-letter code: 26S proteasome regulatory subunit RPN3 (523 aa).

Alanine 2 is modified (N-acetylalanine). The region spanning alanine 270 to asparagine 450 is the PCI domain. At serine 454 the chain carries Phosphoserine. Over residues arginine 480–asparagine 495 the composition is skewed to basic and acidic residues. The segment at arginine 480–leucine 523 is disordered. The span at glycine 496–leucine 523 shows a compositional bias: acidic residues.

The protein belongs to the proteasome subunit S3 family. In terms of assembly, the 26S proteasome is composed of a core protease, known as the 20S proteasome, capped at one or both ends by the 19S regulatory complex (RC). The RC is composed of at least 18 different subunits in two subcomplexes, the base and the lid, which form the portions proximal and distal to the 20S proteolytic core, respectively. N-acetylated by NAT1.

Functionally, acts as a regulatory subunit of the 26S proteasome which is involved in the ATP-dependent degradation of ubiquitinated proteins. In Saccharomyces cerevisiae (strain ATCC 204508 / S288c) (Baker's yeast), this protein is 26S proteasome regulatory subunit RPN3 (RPN3).